A 995-amino-acid polypeptide reads, in one-letter code: DExH-box ATP-dependent RNA helicase DExH10 (995 aa).

The segment at 1–42 (MSAQMEEPETLGKRKESESSKLRSDETPTPEPRTKRRSLKRA) is disordered. N-acetylserine is present on S2. Basic and acidic residues predominate over residues 10 to 26 (TLGKRKESESSKLRSDE). The 157-residue stretch at 90-246 (VACLERKESI…WICYLHKQPC (157 aa)) folds into the Helicase ATP-binding domain. 103 to 110 (AHTSAGKT) provides a ligand contact to ATP. The short motif at 194 to 197 (DEIH) is the DEIH box element. A disordered region spans residues 290 to 318 (DTFPKPKSNDGKKSANGKSGGRGAKGGGG). Residues 307-318 (KSGGRGAKGGGG) are compositionally biased toward gly residues. Positions 323–524 (DVYKIVKMIM…LSYYTILNLL (202 aa)) constitute a Helicase C-terminal domain.

It belongs to the DExH box helicase family. SKI2 subfamily. Expressed in inflorescences, leaves, stems, and roots.

It localises to the nucleus. It is found in the nucleoplasm. The enzyme catalyses ATP + H2O = ADP + phosphate + H(+). Functionally, ATP-dependent RNA helicase that associates with the RNA exosome complex, with the cap binding complex (CBC) and with the NEXT-like complex. Involved in the degradation of a large number of non-coding nuclear exosome substrates such as snoRNA and miRNA precursors, incompletely spliced mRNAs, and spurious transcripts produced from pseudogenes and intergenic regions. Involved in the maintenance of homeotic B and C gene expression in the reproductive whorls. Regulates floral organ spacing and identity, probably through the regulation of protein synthesis or mRNA degradation. The sequence is that of DExH-box ATP-dependent RNA helicase DExH10 from Arabidopsis thaliana (Mouse-ear cress).